Reading from the N-terminus, the 134-residue chain is uncharacterized protein (134 aa).

This is an uncharacterized protein from Saccharomyces cerevisiae (strain ATCC 204508 / S288c) (Baker's yeast).